The following is a 468-amino-acid chain: Glycosyl hydrolase family 109 protein (468 aa).

An N-terminal signal peptide occupies residues Met-1–Ala-19. Residues Met-67–Arg-68, Asp-89, Trp-138–His-141, Glu-158–Val-159, and Asn-187 each bind NAD(+). Residues Tyr-216, Arg-232, Tyr-244–His-247, and Tyr-322 contribute to the substrate site. Position 244 (Tyr-244) interacts with NAD(+).

Belongs to the Gfo/Idh/MocA family. Glycosyl hydrolase 109 subfamily. Requires NAD(+) as cofactor.

Functionally, glycosidase. This is Glycosyl hydrolase family 109 protein from Porphyromonas gingivalis (strain ATCC BAA-308 / W83).